The chain runs to 218 residues: Protein GrpE (218 aa).

Positions 1-10 (MSGEASTPAQ) are enriched in polar residues. Disordered regions lie at residues 1-44 (MSGE…DPAE) and 198-218 (SMGP…AEDS). Residues 200–218 (GPGPSADAEGAASAEAEDS) show a composition bias toward low complexity.

The protein belongs to the GrpE family. As to quaternary structure, homodimer.

It localises to the cytoplasm. Its function is as follows. Participates actively in the response to hyperosmotic and heat shock by preventing the aggregation of stress-denatured proteins, in association with DnaK and GrpE. It is the nucleotide exchange factor for DnaK and may function as a thermosensor. Unfolded proteins bind initially to DnaJ; upon interaction with the DnaJ-bound protein, DnaK hydrolyzes its bound ATP, resulting in the formation of a stable complex. GrpE releases ADP from DnaK; ATP binding to DnaK triggers the release of the substrate protein, thus completing the reaction cycle. Several rounds of ATP-dependent interactions between DnaJ, DnaK and GrpE are required for fully efficient folding. The protein is Protein GrpE of Parasynechococcus marenigrum (strain WH8102).